The sequence spans 146 residues: Hemoglobin cathodic subunit beta (146 aa).

In terms of domain architecture, Globin spans 2 to 146; sequence EWSSSERSTI…LIHALSRQYF (145 aa). Residues His63 and His92 each contribute to the heme b site.

It belongs to the globin family. In terms of assembly, heterotetramer of two alpha chains and two beta chains. As to expression, red blood cells.

Its function is as follows. Involved in oxygen transport from gills to the various peripheral tissues. This chain is Hemoglobin cathodic subunit beta, found in Gymnothorax unicolor (Brown moray).